Reading from the N-terminus, the 794-residue chain is Kinesin-like protein KIN-13A (794 aa).

The Kinesin motor domain maps to 193-526; sequence KIKVVVRKRP…LRYADRVKSL (334 aa). Position 282-289 (282-289) interacts with ATP; it reads GQTGSGKT. The segment at 525–699 is disordered; sequence SLSKSGNSKK…YETASRQYET (175 aa). The span at 569–579 shows a compositional bias: basic and acidic residues; sequence ETRRRVVEKDS. Polar residues-rich tracts occupy residues 580–593 and 611–632; these read NSSTSGIDFRQPTN and EPNSSFAGSTSQRNNISSYPQE. Basic and acidic residues predominate over residues 650 to 668; that stretch reads GLREEKPDRPQNWSKRDVS. Residues 669 to 696 show a composition bias toward polar residues; the sequence is SSDIPTLTNFRQNASETASRQYETASRQ. Residues 705–742 adopt a coiled-coil conformation; the sequence is ENLDALLEEEEALIAAHRKEIEDTMEIVREEMKLLAEV.

The protein belongs to the TRAFAC class myosin-kinesin ATPase superfamily. Kinesin family. KIN-13 subfamily. Component of the active ARAC10-IRC5-KIN13A complex. Interacts (via-C-terminus) with ICR2 and ICR5 (via N-terminus). No interactions with ICR1. Expressed in leaves, roots, young and mature seedlings. Preferentially expressed in the secondary cell wall pits of differentiating metaxylem vessel cells (at the protein level).

It is found in the golgi apparatus. It localises to the golgi stack. The protein localises to the cytoplasm. The protein resides in the cytoskeleton. Internal motor kinesin involved in trichome morphogenesis. Participates in regulating the formation of Golgi-associated vesicles. Plays a central role in microtubule disassembly via the active ARAC10-ICR5 cascade, which establishes the secondary cell wall pattern in metaxylem vessel cells. Acts redundantly with KIN13B to modulate cell wall synthesis and cell expansion via the THE1 pathway. The protein is Kinesin-like protein KIN-13A of Arabidopsis thaliana (Mouse-ear cress).